Here is a 361-residue protein sequence, read N- to C-terminus: Ornithine carbamoyltransferase, mitochondrial (361 aa).

The N-terminal 24 residues, 1-24 (MIPTARCGALRQKIPVQAVRQYSS), are a transit peptide targeting the mitochondrion. Carbamoyl phosphate contacts are provided by residues 89-92 (STRT), Arg140, His167, and Gln170. L-ornithine is bound by residues Asn207, Asp273, Ser277, and Met278. Residue Cys315 is the Proton acceptor of the active site. Carbamoyl phosphate contacts are provided by residues 315 to 316 (CL) and Arg342.

The protein belongs to the aspartate/ornithine carbamoyltransferase superfamily. OTCase family. In terms of assembly, homotrimer.

The protein localises to the mitochondrion matrix. It carries out the reaction carbamoyl phosphate + L-ornithine = L-citrulline + phosphate + H(+). Its pathway is amino-acid biosynthesis; L-arginine biosynthesis; L-arginine from L-ornithine and carbamoyl phosphate: step 1/3. In Aspergillus terreus, this protein is Ornithine carbamoyltransferase, mitochondrial (arg1).